Here is a 70-residue protein sequence, read N- to C-terminus: Movement protein TGBp3 (70 aa).

Over 1-4 (MEAG) the chain is Lumenal. A helical membrane pass occupies residues 5 to 27 (AYLNAIIFVLVATIIAVISRGLT). Topologically, residues 28–70 (RTEPCTIRITGESITVHACHIDSETIKALANLKPLSLERLSFQ) are cytoplasmic.

The protein belongs to the Tymovirales TGBp3 protein family.

It localises to the host endoplasmic reticulum membrane. In terms of biological role, plays a role in viral cell-to-cell propagation, by facilitating genome transport to neighboring plant cells through plasmosdesmata. May induce the formation of granular vesicles derived from the Endoplasmic reticulum, which align on actin filaments. This Potato virus X (strain CP) (PVX) protein is Movement protein TGBp3.